The primary structure comprises 851 residues: DNA mismatch repair protein MutS (851 aa).

602–609 (GPNMSGKS) is an ATP binding site.

It belongs to the DNA mismatch repair MutS family.

This protein is involved in the repair of mismatches in DNA. It is possible that it carries out the mismatch recognition step. This protein has a weak ATPase activity. The polypeptide is DNA mismatch repair protein MutS (Streptococcus pyogenes serotype M6 (strain ATCC BAA-946 / MGAS10394)).